A 549-amino-acid chain; its full sequence is uncharacterized protein (549 aa).

An N-terminal signal peptide occupies residues 1–19; sequence MNWRRIVWLLALVTLPTLA.

This is an uncharacterized protein from Escherichia coli (strain K12).